Here is a 433-residue protein sequence, read N- to C-terminus: Mblk-1-related factor 1 (433 aa).

Positions 145–197 (NKSNILRRNYTVEDLTQAVEDIRQGKLGTRRASVVYGIPRSTLRNKIYKLEAE) constitute an HTH psq-type 1 domain. Residues 173–193 (TRRASVVYGIPRSTLRNKIYK) constitute a DNA-binding region (H-T-H motif). The span at 235–254 (GNQSDSSSSSPHASMCPSSP) shows a compositional bias: low complexity. 2 disordered regions span residues 235 to 278 (GNQS…SCSP) and 304 to 338 (ANIS…PKRG). Over residues 304–319 (ANISNVDTHTPTPISE) the composition is skewed to polar residues. Residues 320–332 (KSQKMHGNEEWKR) show a composition bias toward basic and acidic residues. The region spanning 334–386 (RPKRGQYRKYDKNALDEAVRSVRRGEMTVHRAGSFFGVPHSTLEYKVKERNLM) is the HTH psq-type 2 domain. The segment at residues 362 to 382 (VHRAGSFFGVPHSTLEYKVKE) is a DNA-binding region (H-T-H motif). Positions 393–433 (LYSHDSSTSEDGSQLVTSTISEKSDSSSHTSTPIPFPISLV) are disordered. Positions 396–408 (HDSSTSEDGSQLV) are enriched in polar residues. Residues 409–424 (TSTISEKSDSSSHTST) show a composition bias toward low complexity.

In terms of tissue distribution, expressed in AIM, RIC, AIZ, ADF, ADL, ASK, AWA, AUA, AIN, RIH (or RIR) and RIF head neurons and, in PVP, PVQ and DVA (or DVC) tail neurons, some intestinal cells, somatic gonad and vulva.

It is found in the nucleus. Functionally, may act as transcription activator. Plays a role in neurogenesis by regulating neurite pruning between left and right AIM neurons and left and right RIF neurons during larval development. Regulates olfactory plasticity. The chain is Mblk-1-related factor 1 from Caenorhabditis elegans.